The primary structure comprises 233 residues: Probable F-box protein At3g56670 (233 aa).

One can recognise an F-box domain in the interval 22-69 (HGGVIDIPLNTDSGVTKNTPGEIALLRFKSVSKLWSSIISSRRDFIES).

This is Probable F-box protein At3g56670 from Arabidopsis thaliana (Mouse-ear cress).